The following is a 385-amino-acid chain: uncharacterized protein (385 aa).

This sequence belongs to the mycobacterial PPE family.

This is an uncharacterized protein from Mycobacterium tuberculosis (strain CDC 1551 / Oshkosh).